A 119-amino-acid polypeptide reads, in one-letter code: Protein phosphatase EYA3 (119 aa).

It belongs to the HAD-like hydrolase superfamily. EYA family. Mg(2+) is required as a cofactor.

The protein resides in the cytoplasm. It is found in the nucleus. It catalyses the reaction O-phospho-L-tyrosyl-[protein] + H2O = L-tyrosyl-[protein] + phosphate. Functionally, tyrosine phosphatase that specifically dephosphorylates 'Tyr-142' of histone H2AX (H2AXY142ph). 'Tyr-142' phosphorylation of histone H2AX plays a central role in DNA repair and acts as a mark that distinguishes between apoptotic and repair responses to genotoxic stress. Promotes efficient DNA repair by dephosphorylating H2AX, promoting the recruitment of DNA repair complexes containing MDC1. Its function as histone phosphatase probably explains its role in transcription regulation during organogenesis. May be involved in development of the eye. The polypeptide is Protein phosphatase EYA3 (EYA3) (Gallus gallus (Chicken)).